The chain runs to 383 residues: MTKRRVVVGMSGGVDSSVTAWLLKEQGYDVVGLFMKNWEDDDDGEYCSTRQDWIDVVSVADLIGIDVEAVNFAAEYKDRVFAEFLREYSAGRTPNPDVLCNAEIKFKAFLDHAMSLGAQTIATGHYARVRERDGRFELLKAFDHTKDQSYFLHRLNQAQLSKTMFPLGEIPKTRVREIAAQIGLPNAKKKDSTGICFIGERPFRDFLNRYLPTKPGPMKTPDGKTVGKHIGLAFYTFGQRKGIGLGGSKDGSGEPWFVAAKDIASNTLYVVQGHDHPWLRSRELVAGNVSWVAGEPPADGARCGAKTRYRQADAPCAFGRAAQAGDERFSLVFDEPQWAVTPGQSAVLYDGDVCLGGGIIESAATGRAGTAPAGRAPALVEAR.

Residues 9 to 16 (GMSGGVDS) and methionine 35 each bind ATP. The interaction with target base in tRNA stretch occupies residues 95–97 (NPD). Cysteine 100 functions as the Nucleophile in the catalytic mechanism. A disulfide bridge connects residues cysteine 100 and cysteine 196. Glycine 124 serves as a coordination point for ATP. Residues 146–148 (KDQ) form an interaction with tRNA region. Cysteine 196 (cysteine persulfide intermediate) is an active-site residue. The interval 308–309 (RY) is interaction with tRNA.

It belongs to the MnmA/TRMU family.

It is found in the cytoplasm. The catalysed reaction is S-sulfanyl-L-cysteinyl-[protein] + uridine(34) in tRNA + AH2 + ATP = 2-thiouridine(34) in tRNA + L-cysteinyl-[protein] + A + AMP + diphosphate + H(+). Its function is as follows. Catalyzes the 2-thiolation of uridine at the wobble position (U34) of tRNA, leading to the formation of s(2)U34. The chain is tRNA-specific 2-thiouridylase MnmA from Burkholderia pseudomallei (strain 1106a).